The following is a 357-amino-acid chain: Holliday junction branch migration complex subunit RuvB (357 aa).

The interval 4–195 (TDKLAAKAVS…FGIVARLEFY (192 aa)) is large ATPase domain (RuvB-L). Residues Leu-34, Arg-35, Gly-76, Lys-79, Thr-80, Thr-81, 142-144 (EDY), Arg-185, Tyr-195, and Arg-232 each bind ATP. Residue Thr-80 coordinates Mg(2+). The segment at 196–266 (TPTELARIVT…VADAALAMLD (71 aa)) is small ATPAse domain (RuvB-S). The tract at residues 269–357 (AVGFDLMDRK…PARDLWDNNA (89 aa)) is head domain (RuvB-H). DNA-binding residues include Arg-305, Arg-324, and Arg-329.

Belongs to the RuvB family. Homohexamer. Forms an RuvA(8)-RuvB(12)-Holliday junction (HJ) complex. HJ DNA is sandwiched between 2 RuvA tetramers; dsDNA enters through RuvA and exits via RuvB. An RuvB hexamer assembles on each DNA strand where it exits the tetramer. Each RuvB hexamer is contacted by two RuvA subunits (via domain III) on 2 adjacent RuvB subunits; this complex drives branch migration. In the full resolvosome a probable DNA-RuvA(4)-RuvB(12)-RuvC(2) complex forms which resolves the HJ.

It localises to the cytoplasm. It catalyses the reaction ATP + H2O = ADP + phosphate + H(+). Its function is as follows. The RuvA-RuvB-RuvC complex processes Holliday junction (HJ) DNA during genetic recombination and DNA repair, while the RuvA-RuvB complex plays an important role in the rescue of blocked DNA replication forks via replication fork reversal (RFR). RuvA specifically binds to HJ cruciform DNA, conferring on it an open structure. The RuvB hexamer acts as an ATP-dependent pump, pulling dsDNA into and through the RuvAB complex. RuvB forms 2 homohexamers on either side of HJ DNA bound by 1 or 2 RuvA tetramers; 4 subunits per hexamer contact DNA at a time. Coordinated motions by a converter formed by DNA-disengaged RuvB subunits stimulates ATP hydrolysis and nucleotide exchange. Immobilization of the converter enables RuvB to convert the ATP-contained energy into a lever motion, pulling 2 nucleotides of DNA out of the RuvA tetramer per ATP hydrolyzed, thus driving DNA branch migration. The RuvB motors rotate together with the DNA substrate, which together with the progressing nucleotide cycle form the mechanistic basis for DNA recombination by continuous HJ branch migration. Branch migration allows RuvC to scan DNA until it finds its consensus sequence, where it cleaves and resolves cruciform DNA. In Ralstonia nicotianae (strain ATCC BAA-1114 / GMI1000) (Ralstonia solanacearum), this protein is Holliday junction branch migration complex subunit RuvB.